The chain runs to 505 residues: Maturase K (505 aa).

It belongs to the intron maturase 2 family. MatK subfamily.

The protein resides in the plastid. It localises to the chloroplast. Functionally, usually encoded in the trnK tRNA gene intron. Probably assists in splicing its own and other chloroplast group II introns. The polypeptide is Maturase K (Physcomitrium patens (Spreading-leaved earth moss)).